A 178-amino-acid polypeptide reads, in one-letter code: Photosystem I assembly protein Ycf4 (178 aa).

Helical transmembrane passes span 19–39 (ILVALMVTIGGIGFLFASLSS) and 61–81 (LIMGLYSLAAALLASYLWAVI).

Belongs to the Ycf4 family.

The protein localises to the cellular thylakoid membrane. In terms of biological role, seems to be required for the assembly of the photosystem I complex. This Synechococcus sp. (strain CC9311) protein is Photosystem I assembly protein Ycf4.